The following is a 285-amino-acid chain: Cyclin-Y-like protein 1B (285 aa).

Positions 111–209 constitute a Cyclin N-terminal domain; sequence PKRNCIFRHF…CFLELLEFNI (99 aa).

It belongs to the cyclin family. Cyclin Y subfamily.

This chain is Cyclin-Y-like protein 1B, found in Homo sapiens (Human).